The chain runs to 217 residues: Small ribosomal subunit protein uS3 (217 aa).

Residues 38 to 106 (IRKFIDNELK…KVHINVIEIK (69 aa)) form the KH type-2 domain.

This sequence belongs to the universal ribosomal protein uS3 family. As to quaternary structure, part of the 30S ribosomal subunit. Forms a tight complex with proteins S10 and S14.

Functionally, binds the lower part of the 30S subunit head. Binds mRNA in the 70S ribosome, positioning it for translation. This chain is Small ribosomal subunit protein uS3, found in Staphylococcus haemolyticus (strain JCSC1435).